Here is a 330-residue protein sequence, read N- to C-terminus: Aspartate--ammonia ligase (330 aa).

Belongs to the class-II aminoacyl-tRNA synthetase family. AsnA subfamily.

The protein localises to the cytoplasm. The catalysed reaction is L-aspartate + NH4(+) + ATP = L-asparagine + AMP + diphosphate + H(+). It functions in the pathway amino-acid biosynthesis; L-asparagine biosynthesis; L-asparagine from L-aspartate (ammonia route): step 1/1. The polypeptide is Aspartate--ammonia ligase (Shigella flexneri serotype 5b (strain 8401)).